We begin with the raw amino-acid sequence, 392 residues long: 1-deoxy-D-xylulose 5-phosphate reductoisomerase (392 aa).

NADPH contacts are provided by threonine 10, glycine 11, serine 12, isoleucine 13, asparagine 38, and asparagine 124. Lysine 125 is a 1-deoxy-D-xylulose 5-phosphate binding site. Glutamate 126 is an NADPH binding site. Aspartate 150 contributes to the Mn(2+) binding site. Residues serine 151, glutamate 152, serine 176, and histidine 199 each contribute to the 1-deoxy-D-xylulose 5-phosphate site. Residue glutamate 152 participates in Mn(2+) binding. Position 205 (glycine 205) interacts with NADPH. 1-deoxy-D-xylulose 5-phosphate-binding residues include serine 212, asparagine 217, lysine 218, and glutamate 221. Glutamate 221 contacts Mn(2+).

Belongs to the DXR family. Requires Mg(2+) as cofactor. Mn(2+) is required as a cofactor.

It catalyses the reaction 2-C-methyl-D-erythritol 4-phosphate + NADP(+) = 1-deoxy-D-xylulose 5-phosphate + NADPH + H(+). Its pathway is isoprenoid biosynthesis; isopentenyl diphosphate biosynthesis via DXP pathway; isopentenyl diphosphate from 1-deoxy-D-xylulose 5-phosphate: step 1/6. Functionally, catalyzes the NADPH-dependent rearrangement and reduction of 1-deoxy-D-xylulose-5-phosphate (DXP) to 2-C-methyl-D-erythritol 4-phosphate (MEP). The chain is 1-deoxy-D-xylulose 5-phosphate reductoisomerase from Synechococcus sp. (strain JA-2-3B'a(2-13)) (Cyanobacteria bacterium Yellowstone B-Prime).